The sequence spans 69 residues: Neuropeptide-like protein 30 (69 aa).

Positions 1-22 (MISTSSILILVVLLACFMAASA) are cleaved as a signal peptide. Tyr-29, Tyr-39, Tyr-46, and Tyr-53 each carry tyrosine amide. Residues Trp-58 and Trp-67 each carry the tryptophan amide modification.

Belongs to the YARP (YGGW-amide related peptide) family. In terms of tissue distribution, expressed in hypoderm.

It is found in the secreted. Its function is as follows. May have antimicrobial activity. May play a role in response to fungal infection. The sequence is that of Neuropeptide-like protein 30 (nlp-30) from Caenorhabditis elegans.